A 321-amino-acid chain; its full sequence is Mas-related G-protein coupled receptor member B4 (321 aa).

The Extracellular segment spans residues 1-33 (MGTTTLAWNINNTAENGSYTEMFSCITKFNTLN). 2 N-linked (GlcNAc...) asparagine glycosylation sites follow: asparagine 11 and asparagine 16. A helical transmembrane segment spans residues 34-54 (FLTVIIAVVGLAGNGIVLWLL). The Cytoplasmic segment spans residues 55 to 62 (AFHLHRNA). A helical membrane pass occupies residues 63 to 83 (FSVYVLNLAGADFLYLFTQVV). Topologically, residues 84-97 (HSLECVLQLDNNSF) are extracellular. Asparagine 94 carries an N-linked (GlcNAc...) asparagine glycan. A helical transmembrane segment spans residues 98–118 (YILLIVTMFAYLAGLCMIAAI). Topologically, residues 119–146 (SAERCLSVMWPIWYHCQRPRHTSAIMCA) are cytoplasmic. A helical membrane pass occupies residues 147-167 (LVWVSSLLLSLVVGLGCGFLF). Residues 168-172 (SYYDY) are Extracellular-facing. Residues 173 to 193 (YFCITLNFITAAFLIVLSVVL) traverse the membrane as a helical segment. The Cytoplasmic segment spans residues 194–215 (SVSSLALLVKIVWGSHRIPVTR). The chain crosses the membrane as a helical span at residues 216–236 (FFVTIALTVVVFIYFGMPFGI). The Extracellular segment spans residues 237 to 257 (CWFLLSRIMEFDSIFFNNVYE). Residues 258 to 278 (IIEFLSCVNSCANPIIYFLVG) traverse the membrane as a helical segment. Topologically, residues 279-321 (SIRQHRLRWQSLKLLLQRAMQDTPEEESGERGPSQRSGELETV) are cytoplasmic. The interval 299–321 (QDTPEEESGERGPSQRSGELETV) is disordered.

It belongs to the G-protein coupled receptor 1 family. Mas subfamily.

The protein localises to the membrane. Its function is as follows. Orphan receptor. Probably involved in the function of nociceptive neurons. May regulate nociceptor function and/or development, including the sensation or modulation of pain. This is Mas-related G-protein coupled receptor member B4 (Mrgprb4) from Mus musculus (Mouse).